The sequence spans 234 residues: Phosphoribosylformylglycinamidine synthase subunit PurQ (234 aa).

A Glutamine amidotransferase type-1 domain is found at 5-234; sequence TVGIVVFPGS…ESLFAHLAGA (230 aa). Cys-89 functions as the Nucleophile in the catalytic mechanism. Residues His-206 and Glu-208 contribute to the active site.

In terms of assembly, part of the FGAM synthase complex composed of 1 PurL, 1 PurQ and 2 PurS subunits.

It is found in the cytoplasm. The catalysed reaction is N(2)-formyl-N(1)-(5-phospho-beta-D-ribosyl)glycinamide + L-glutamine + ATP + H2O = 2-formamido-N(1)-(5-O-phospho-beta-D-ribosyl)acetamidine + L-glutamate + ADP + phosphate + H(+). The enzyme catalyses L-glutamine + H2O = L-glutamate + NH4(+). It participates in purine metabolism; IMP biosynthesis via de novo pathway; 5-amino-1-(5-phospho-D-ribosyl)imidazole from N(2)-formyl-N(1)-(5-phospho-D-ribosyl)glycinamide: step 1/2. Functionally, part of the phosphoribosylformylglycinamidine synthase complex involved in the purines biosynthetic pathway. Catalyzes the ATP-dependent conversion of formylglycinamide ribonucleotide (FGAR) and glutamine to yield formylglycinamidine ribonucleotide (FGAM) and glutamate. The FGAM synthase complex is composed of three subunits. PurQ produces an ammonia molecule by converting glutamine to glutamate. PurL transfers the ammonia molecule to FGAR to form FGAM in an ATP-dependent manner. PurS interacts with PurQ and PurL and is thought to assist in the transfer of the ammonia molecule from PurQ to PurL. The chain is Phosphoribosylformylglycinamidine synthase subunit PurQ from Chlorobaculum tepidum (strain ATCC 49652 / DSM 12025 / NBRC 103806 / TLS) (Chlorobium tepidum).